The sequence spans 144 residues: Large ribosomal subunit protein uL15 (144 aa).

The tract at residues 1 to 53 (MRLNTLSPAEGAKHAPKRVGRGIGSGLGKTAGRGHKGQNSRSGGGVRRGFEGG) is disordered. Residues 21-31 (RGIGSGLGKTA) are compositionally biased toward gly residues.

It belongs to the universal ribosomal protein uL15 family. In terms of assembly, part of the 50S ribosomal subunit.

In terms of biological role, binds to the 23S rRNA. The protein is Large ribosomal subunit protein uL15 of Serratia proteamaculans (strain 568).